Reading from the N-terminus, the 243-residue chain is Adapter protein MecA (243 aa).

The tract at residues Asn119 to Pro140 is disordered.

Belongs to the MecA family. Homodimer.

Enables the recognition and targeting of unfolded and aggregated proteins to the ClpC protease or to other proteins involved in proteolysis. This chain is Adapter protein MecA, found in Lactiplantibacillus plantarum (strain ATCC BAA-793 / NCIMB 8826 / WCFS1) (Lactobacillus plantarum).